The following is a 176-amino-acid chain: Nucleoside triphosphate/diphosphate phosphatase (176 aa).

Arg-23 serves as the catalytic Proton donor. Asn-87, Asp-103, Asp-105, Asp-107, Asp-120, and Glu-123 together coordinate Mg(2+).

It belongs to the Ntdp family. Mg(2+) serves as cofactor.

It carries out the reaction a ribonucleoside 5'-triphosphate + H2O = a ribonucleoside 5'-diphosphate + phosphate + H(+). It catalyses the reaction a ribonucleoside 5'-diphosphate + H2O = a ribonucleoside 5'-phosphate + phosphate + H(+). Functionally, has nucleoside phosphatase activity towards nucleoside triphosphates and nucleoside diphosphates. This chain is Nucleoside triphosphate/diphosphate phosphatase, found in Bacillus cereus (strain G9842).